Reading from the N-terminus, the 38-residue chain is Phospholipase A2 2 (38 aa).

Positions 28, 30, and 32 each coordinate Ca(2+).

This sequence belongs to the phospholipase A2 family. Group I subfamily. Requires Ca(2+) as cofactor. As to expression, expressed by the venom gland.

It localises to the secreted. The catalysed reaction is a 1,2-diacyl-sn-glycero-3-phosphocholine + H2O = a 1-acyl-sn-glycero-3-phosphocholine + a fatty acid + H(+). Functionally, snake venom phospholipase A2 (PLA2) that inhibits neuromuscular transmission by blocking acetylcholine release from the nerve termini. PLA2 catalyzes the calcium-dependent hydrolysis of the 2-acyl groups in 3-sn-phosphoglycerides. This chain is Phospholipase A2 2, found in Calliophis bivirgatus (Blue Malaysian coral snake).